Consider the following 61-residue polypeptide: MLNIFSLICICLNSALYSSNFFFAKLPEAYAFLNPIVDVMPVIPLFFFLLAFVWQAAVSFR.

A propeptide spanning residues 1–24 (MLNIFSLICICLNSALYSSNFFFA) is cleaved from the precursor. The helical transmembrane segment at 40-60 (MPVIPLFFFLLAFVWQAAVSF) threads the bilayer.

The protein belongs to the PsbK family. PSII is composed of 1 copy each of membrane proteins PsbA, PsbB, PsbC, PsbD, PsbE, PsbF, PsbH, PsbI, PsbJ, PsbK, PsbL, PsbM, PsbT, PsbX, PsbY, PsbZ, Psb30/Ycf12, at least 3 peripheral proteins of the oxygen-evolving complex and a large number of cofactors. It forms dimeric complexes.

The protein resides in the plastid. The protein localises to the chloroplast thylakoid membrane. One of the components of the core complex of photosystem II (PSII). PSII is a light-driven water:plastoquinone oxidoreductase that uses light energy to abstract electrons from H(2)O, generating O(2) and a proton gradient subsequently used for ATP formation. It consists of a core antenna complex that captures photons, and an electron transfer chain that converts photonic excitation into a charge separation. This chain is Photosystem II reaction center protein K, found in Vitis vinifera (Grape).